A 109-amino-acid polypeptide reads, in one-letter code: MVCGGFACSKNALCALNVVYMLVGLLLIGVAAWAKGLGLVSSIHIIGGVIAVGVFLLLIAVAGLVGAVNHHQVLLFFYMIILGLVFIFQFGISCSCLAINLSKQAGIIN.

Over 1 to 12 (MVCGGFACSKNA) the chain is Cytoplasmic. The chain crosses the membrane as a helical span at residues 13-33 (LCALNVVYMLVGLLLIGVAAW). At 34–44 (AKGLGLVSSIH) the chain is on the extracellular side. Residues 45-65 (IIGGVIAVGVFLLLIAVAGLV) traverse the membrane as a helical segment. At 66 to 72 (GAVNHHQ) the chain is on the cytoplasmic side. The helical transmembrane segment at 73-93 (VLLFFYMIILGLVFIFQFGIS) threads the bilayer. Residues 94–109 (CSCLAINLSKQAGIIN) lie on the Extracellular side of the membrane. Asparagine 100 carries N-linked (GlcNAc...) asparagine glycosylation.

This sequence belongs to the tetraspanin (TM4SF) family.

Its subcellular location is the membrane. The sequence is that of Tetraspanin-31 (TSPAN31) from Sus scrofa (Pig).